The sequence spans 603 residues: NAD 5'-nucleotidase (603 aa).

The signal sequence occupies residues 1-25 (MLLSKKSASFALSAFAMLFTSVALA). Positions 44, 46, 94, 126, and 227 each coordinate Zn(2+). Residues Arg-397, Arg-437, Phe-456, and 540–546 (YVAGGKD) contribute to the substrate site.

The protein belongs to the 5'-nucleotidase family. The cofactor is Zn(2+).

The protein localises to the periplasm. It carries out the reaction a ribonucleoside 5'-phosphate + H2O = a ribonucleoside + phosphate. Its function is as follows. Degrades NAD into adenosine and nicotinamide riboside, the latter being subsequently internalized by a specific permease. Also endowed with NAD(P) pyrophosphatase activity. Exhibits a broad substrate specificity, recognizing either mono- or dinucleotide nicotinamides and different adenosine phosphates with a maximal activity on 5'-adenosine monophosphate. The polypeptide is NAD 5'-nucleotidase (Haemophilus influenzae (strain ATCC 51907 / DSM 11121 / KW20 / Rd)).